We begin with the raw amino-acid sequence, 539 residues long: Carboxysome assembly protein CcmM (539 aa).

The carbonic anhydrase-like domain stretch occupies residues 1–214 (MPSPTTVPVA…PLRPSSSEAT (214 aa)). The segment at 194-213 (TADFHSTPTPSPLRPSSSEA) is disordered. The stretch at 226–397 (SSEVITQVRS…VLAELENCLS (172 aa)) is one RbcS-like repeat 1, SSUL1 repeat. 2 disulfides stabilise this stretch: Cys261–Cys279 and Cys377–Cys395. The stretch at 341–425 (LSAEVVNKVR…RVFEALIQDP (85 aa)) is one RbcS-like repeat 2, SSUL2 repeat. The interval 427–459 (GPVGSAKAAAAPVSSATPSSHSYTSNGSSSSDV) is disordered. The segment covering 431 to 457 (SAKAAAAPVSSATPSSHSYTSNGSSSS) has biased composition (low complexity). The RbcS-like repeat 3, SSUL3 repeat unit spans residues 453 to 539 (GSSSSDVAGQ…RVAELLIQKP (87 aa)).

The protein belongs to the gamma-class carbonic anhydrase family. In terms of assembly, probably a homotrimer. Purifies from carboxysomes in complex with both RuBisCO subunits and carbonic anhydrase (ccaA); the complex is probably associated with the carboxysome shell. Interacts with CcmN. Binds holo-RuBisCO (RbcL(8)-RbcS(8)) via its SSUL domains; the SSUL domain binds close to the equitorial domain of RuBisCO between RbcL dimers, with 1 M35 protein per dimer. The short form purifies from carboxysomes in complex with both RuBisCO subunits; the complex is probably associated with the carboxysome shell. In terms of processing, identified as 2 proteins of 58 and 38 kDa by mass spectrometry, called M58 and M35, the shorter protein is translated starting at Val-216. Protease inhibitors do not alter the appearance of M35. In isolated carboxysomes M35 is 4-5 fold more abundant. The first amino acid (equivalent to Val-216) is not seen in Edman degradation, while Tyr-219 and Gln-222 may be post-translationally modified.

The protein localises to the carboxysome. Its function is as follows. Functions as a scaffold protein for the assembly of beta-carboxysomes, initiates carboxysome assembly by coalescing RuBisCO (ribulose bisphosphate carboxylase, rbcL-rbcS). Produced as a full-length (M58) and a shorter form (M35); both forms are required for correct carboxysome assembly and growth. The short form is more abundant. Despite its strong similarity to gamma-class carbonic anhydrase (CA) it does not have detectable CA activity. In terms of biological role, the M35 isoform is able to condense RuBisCO into a liquid matrix; the presence of disulfide bonds in M35 reduces affinity for RuBisCO, while mutating all 4 Cys to Ser causes a 4-fold increase in doubling time, more than 15% increase in CO(2) requirement, and abnormal carboxysomes. Functionally, beta-carboxysome assembly initiates when soluble RuBisCO is condensed into a liquid matrix in a pre-carboxysome by the RbcS-like domains of probably both CcmM58 and CcmM35. CcmN interacts with the N-terminus of CcmM58, and then recruits the CcmK2 major shell protein plus other less abundant CcmK proteins via CcmN's encapsulation peptide. Shell formation requires CcmK proteins and CcmO. CcmL caps the otherwise elongated carboxysome. Once fully encapsulated carboxysomes are formed, they migrate within the cell probably via interactions with the cytoskeleton. The polypeptide is Carboxysome assembly protein CcmM (Synechococcus elongatus (strain ATCC 33912 / PCC 7942 / FACHB-805) (Anacystis nidulans R2)).